Reading from the N-terminus, the 732-residue chain is TIR domain-containing adapter molecule 1 (732 aa).

The tract at residues 1–153 is TRIF-NTD; it reads MDNPGPSLRG…CSSDIKGDPS (153 aa). The TRAF6-binding signature appears at 84-91; that stretch reads EGPEEPPD. Positions 144–191 are disordered; sequence CSSDIKGDPSGFQPLHSHQGSLQPPSASPAVTRSQPRPIDTPDWSWGH. A compositionally biased stretch (polar residues) spans 159 to 178; that stretch reads HSHQGSLQPPSASPAVTRSQ. The pLxIS motif motif lies at 206–209; sequence LEIS. Ser-209 carries the post-translational modification Phosphoserine. Residue Lys-228 forms a Glycyl lysine isopeptide (Lys-Gly) (interchain with G-Cter in ubiquitin) linkage. Short sequence motifs (TRAF6-binding) lie at residues 247 to 254 and 296 to 306; these read QEPEEISW and HCPIECTELST. The span at 305 to 331 shows a compositional bias: polar residues; sequence STNSRSPLTSTTESVGKQWPITSQRSP. Residues 305–389 form a disordered region; that stretch reads STNSRSPLTS…TSTSPVLDHS (85 aa). The span at 345–359 shows a compositional bias: low complexity; that stretch reads SSSPPAQPPSLQASP. The TIR domain maps to 395 to 534; that stretch reads KFYNFVVIHA…KVANTFKTQK (140 aa). Positions 514–713 are sufficient to induce apoptosis; sequence WLDEHSPIFA…SSDDKTECSE (200 aa). 2 disordered regions span residues 603 to 679 and 696 to 732; these read TPSW…GPQP and MWGH…ETPE. 2 stretches are compositionally biased toward pro residues: residues 604–615 and 625–657; these read PSWPGCPQPIPS and PYSP…PPVS. Over residues 658–671 the composition is skewed to low complexity; that stretch reads SPQSQSFPSASSPA.

As to quaternary structure, homodimer. Found in a multi-helicase-TICAM1 complex at least composed of DHX36, DDX1, DDX21 and TICAM1; this complex exists in resting cells with or without poly(I:C) RNA ligand stimulation. Interacts (via TIR domain) with DDX21 (via C-terminus). Interacts (via TIR domain) with DHX36 (via C-terminus). Interacts with AZI2 and IRF7. Interacts (when phosphorylated) with IRF3; following activation and phosphorylation on the pLxIS motif by TBK1, recruits IRF3. Interacts with TICAM2 in TLR4 recruitment. Interaction with PIAS4 inhibits the TICAM1-induced NF-kappa-B, IRF and IFNB1 activation. Interacts with IKBKB and IKBKE. Interaction with SARM1 blocks TICAM1-dependent transcription factor activation. Interacts with TRAF3. Interacts with TRAFD1. Interacts with UBQLN1 (via UBA domain). Interacts with TBK1, TRAF6 and RIPK1 and these interactions are enhanced in the presence of WDFY1. Interacts (via the TIR domain) with TLR3 in response to poly(I:C) and this interaction is enhanced in the presence of WDFY1. Interacts with TLR4 in response to poly(I:C) in a WDFY1-dependent manner. Interacts with WDFY1 in response to poly(I:C). Interacts with TRIM56. Interacts (via the TIR domain) with TLR5. Interacts with TRIM8. Interacts with TAX1BP1 and TRIM32; these interactions target TICAM1 to TAX1BP1-mediated selective autophagic degradation. Interacts with DDX50. In terms of processing, phosphorylated by TBK1. Following activation, phosphorylated by TBK1 at Ser-209 in the pLxIS motif. The phosphorylated pLxIS motif constitutes an IRF3-binding motif, leading to recruitment of the transcription factor IRF3 to induce type-I interferons and other cytokines. Post-translationally, polyubiquitinated at Lys-228 by TRIM38 with 'Lys-48'-linked chains, leading to proteasomal degradation. Polyubiquitinated with 'Lys-6'- and 'Lys-33'-linked chains in a TRIM8-dependent manner; ubiquitination disrupts the interaction with TBK1 and subsequent interferon production.

It is found in the cytoplasm. The protein resides in the cytosol. It localises to the cytoplasmic vesicle. The protein localises to the autophagosome. Its subcellular location is the mitochondrion. Involved in innate immunity against invading pathogens. Adapter used by TLR3, TLR4 (through TICAM2) and TLR5 to mediate NF-kappa-B and interferon-regulatory factor (IRF) activation, and to induce apoptosis. Ligand binding to these receptors results in TRIF recruitment through its TIR domain. Distinct protein-interaction motifs allow recruitment of the effector proteins TBK1, TRAF6 and RIPK1, which in turn, lead to the activation of transcription factors IRF3 and IRF7, NF-kappa-B and FADD respectively. Phosphorylation by TBK1 on the pLxIS motif leads to recruitment and subsequent activation of the transcription factor IRF3 to induce expression of type I interferon and exert a potent immunity against invading pathogens. Component of a multi-helicase-TICAM1 complex that acts as a cytoplasmic sensor of viral double-stranded RNA (dsRNA) and plays a role in the activation of a cascade of antiviral responses including the induction of pro-inflammatory cytokines. This chain is TIR domain-containing adapter molecule 1 (Ticam1), found in Mus musculus (Mouse).